Reading from the N-terminus, the 578-residue chain is Frizzled-2 (578 aa).

The first 17 residues, 1-17 (MLLRISVLFLLLGSCGA), serve as a signal peptide directing secretion. Over 18 to 236 (LFGKRQKCEQ…AESHSLVSNW (219 aa)) the chain is Extracellular. The FZ domain occupies 20–144 (GKRQKCEQIT…MSTGNICAAP (125 aa)). Cystine bridges form between Cys25–Cys86, Cys33–Cys79, Cys70–Cys108, Cys97–Cys141, and Cys101–Cys125. Asn39 is a glycosylation site (N-linked (GlcNAc...) asparagine). Residues 138-175 (GNICAAPPDTPKKQHKGHHHKNQNQNQNQNHNYSPDGP) form a disordered region. Basic residues predominate over residues 150–159 (KQHKGHHHKN). Positions 160–169 (QNQNQNQNHN) are enriched in low complexity. Residue Asn213 is glycosylated (N-linked (GlcNAc...) asparagine). Residues 237-257 (MAFWSITCCVLASFTFLTFLI) form a helical membrane-spanning segment. Topologically, residues 258 to 268 (ETDRFQYPERP) are cytoplasmic. Residues 269–289 (IFMLAFCQLMVAVGFMIRYFV) form a helical membrane-spanning segment. Topologically, residues 290–312 (GHEEIACDSMRIKGADDNSGSLC) are extracellular. A helical transmembrane segment spans residues 313–333 (FVVFLLTYFFGMAASVWWVIL). Over 334 to 354 (SLTWVLSAASKWSPEAISSFS) the chain is Cytoplasmic. The helical transmembrane segment at 355–375 (FHFHVVGWCLPAIQTVLVIVF) threads the bilayer. At 376 to 398 (NAIDGDPITGICYVGNTDLQFQR) the chain is on the extracellular side. The helical transmembrane segment at 399–419 (IFVLFPLLVYFIVGVLFLVIG) threads the bilayer. The Cytoplasmic portion of the chain corresponds to 420–449 (FCNLWSIRNEVQKQHPSLESAHKITQLMSK). The helical transmembrane segment at 450–470 (IGIFSLLYTIPSLLIICVLFY) threads the bilayer. The Extracellular segment spans residues 471 to 497 (EQNHRSLWEQSQLCSCSPKQTIGDSSL). The chain crosses the membrane as a helical span at residues 498 to 518 (IISLIKTCCMCILGWTSGFWV). Topologically, residues 519–578 (CSTKTLSSWKNAICCLGSSRSLPKYQPADILYAKSDMSSSQFYNTSLRHNHLYGGIPDKL) are cytoplasmic. Positions 522–527 (KTLSSW) match the Lys-Thr-X-X-X-Trp motif, mediates interaction with the PDZ domain of Dvl family members motif. A PDZ-binding motif is present at residues 556–558 (SSS).

This sequence belongs to the G-protein coupled receptor Fz/Smo family. Expressed in two pairs of head neurons and throughout the pharynx.

It is found in the cell membrane. In terms of biological role, receptor for Wnt proteins. Most frizzled receptors are coupled to the beta-catenin canonical signaling pathway, which leads to the activation of disheveled proteins, inhibition of gsk-3 kinase, nuclear accumulation of beta-catenin and activation of Wnt target genes. A second signaling pathway involving PKC and calcium fluxes has been seen for some family members, but it is not yet clear if it represents a distinct pathway or if it can be integrated in the canonical pathway, as PKC seems to be required for Wnt-mediated inactivation of gsk-3 kinase. Both pathways seem to involve interactions with G-proteins. Required for the migration and axon formation and guidance of different neuronal cell types including canal-associated neurons (CAN), hermaphrodite-specific neurons (HSN), anterior lateral microtubule neurons (ALM), and the right Q neuroblast (QR) and its descendants. Directs ALM migration through frizzled protein mom-5 and Wnt ligands cwn-1, cwn-2 and egl-20. May act redundantly with mom-5 to direct CAN migration. Plays a role in the organization of head ganglion cells. Probably by acting as a receptor for Wnt ligand cwn-2, plays a role in the positioning of the nerve ring and may in addition positively regulate the neurite outgrowth of RME GABAergic motor neurons along the anterior-posterior axis of the body. This chain is Frizzled-2, found in Caenorhabditis elegans.